A 418-amino-acid chain; its full sequence is Gamma-glutamyl phosphate reductase (418 aa).

This sequence belongs to the gamma-glutamyl phosphate reductase family.

Its subcellular location is the cytoplasm. It catalyses the reaction L-glutamate 5-semialdehyde + phosphate + NADP(+) = L-glutamyl 5-phosphate + NADPH + H(+). It functions in the pathway amino-acid biosynthesis; L-proline biosynthesis; L-glutamate 5-semialdehyde from L-glutamate: step 2/2. Its function is as follows. Catalyzes the NADPH-dependent reduction of L-glutamate 5-phosphate into L-glutamate 5-semialdehyde and phosphate. The product spontaneously undergoes cyclization to form 1-pyrroline-5-carboxylate. The polypeptide is Gamma-glutamyl phosphate reductase (Thermobifida fusca (strain YX)).